The following is a 474-amino-acid chain: Aspartyl/glutamyl-tRNA(Asn/Gln) amidotransferase subunit B (474 aa).

It belongs to the GatB/GatE family. GatB subfamily. In terms of assembly, heterotrimer of A, B and C subunits.

It catalyses the reaction L-glutamyl-tRNA(Gln) + L-glutamine + ATP + H2O = L-glutaminyl-tRNA(Gln) + L-glutamate + ADP + phosphate + H(+). The catalysed reaction is L-aspartyl-tRNA(Asn) + L-glutamine + ATP + H2O = L-asparaginyl-tRNA(Asn) + L-glutamate + ADP + phosphate + 2 H(+). Allows the formation of correctly charged Asn-tRNA(Asn) or Gln-tRNA(Gln) through the transamidation of misacylated Asp-tRNA(Asn) or Glu-tRNA(Gln) in organisms which lack either or both of asparaginyl-tRNA or glutaminyl-tRNA synthetases. The reaction takes place in the presence of glutamine and ATP through an activated phospho-Asp-tRNA(Asn) or phospho-Glu-tRNA(Gln). The chain is Aspartyl/glutamyl-tRNA(Asn/Gln) amidotransferase subunit B from Campylobacter curvus (strain 525.92).